Here is a 707-residue protein sequence, read N- to C-terminus: Polyribonucleotide nucleotidyltransferase (707 aa).

2 residues coordinate Mg(2+): Asp488 and Asp494. The KH domain maps to 554–613 (PRLFTMKINQDKIREVIGKGGETIRSITAETGTEINIAEDGTITIAATTQEAGDAAKKRI). An S1 motif domain is found at 623 to 693 (GKVYEGTVVK…DRGRVRLSIK (71 aa)).

It belongs to the polyribonucleotide nucleotidyltransferase family. Requires Mg(2+) as cofactor.

It localises to the cytoplasm. It catalyses the reaction RNA(n+1) + phosphate = RNA(n) + a ribonucleoside 5'-diphosphate. Involved in mRNA degradation. Catalyzes the phosphorolysis of single-stranded polyribonucleotides processively in the 3'- to 5'-direction. The protein is Polyribonucleotide nucleotidyltransferase of Neisseria meningitidis serogroup B (strain ATCC BAA-335 / MC58).